A 146-amino-acid polypeptide reads, in one-letter code: Protein MucA (146 aa).

Active-site for autocatalytic cleavage activity residues include S62 and K99.

It belongs to the peptidase S24 family.

Its function is as follows. Involved in UV protection and mutation. This is Protein MucA (mucA) from Escherichia coli.